A 110-amino-acid chain; its full sequence is Large ribosomal subunit protein uL22 (110 aa).

It belongs to the universal ribosomal protein uL22 family. In terms of assembly, part of the 50S ribosomal subunit.

Its function is as follows. This protein binds specifically to 23S rRNA; its binding is stimulated by other ribosomal proteins, e.g. L4, L17, and L20. It is important during the early stages of 50S assembly. It makes multiple contacts with different domains of the 23S rRNA in the assembled 50S subunit and ribosome. In terms of biological role, the globular domain of the protein is located near the polypeptide exit tunnel on the outside of the subunit, while an extended beta-hairpin is found that lines the wall of the exit tunnel in the center of the 70S ribosome. In Syntrophobacter fumaroxidans (strain DSM 10017 / MPOB), this protein is Large ribosomal subunit protein uL22.